We begin with the raw amino-acid sequence, 522 residues long: Semenogelin-2 (522 aa).

The signal sequence occupies residues 1–23; that stretch reads MKSIILFVLSLLLILEKQAAVMG. Disordered regions lie at residues 26-62, 132-158, 272-358, and 379-522; these read CGSK…SKGS, GGQA…ISSQ, NLNQ…ERHL, and EEQI…PVST. 2 stretches are compositionally biased toward polar residues: residues 31–40 and 137–158; these read QLPSGSSQFP and RGTQ…ISSQ. Over residues 292–310 the composition is skewed to basic and acidic residues; sequence RTEERQLNRGEKSVQKDVS. The span at 325–335 shows a compositional bias: polar residues; the sequence is KSQNQVTIHSQ. Residues 336 to 345 are compositionally biased toward basic and acidic residues; that stretch reads GQEHGHKENK. Polar residues-rich tracts occupy residues 379–397, 427–436, and 446–464; these read EEQI…SQAQ, KDVSQSSTSF, and SQIQ…QNAK. Composition is skewed to basic and acidic residues over residues 465 to 492 and 499 to 522; these read GKSD…ESSE and TEHE…PVST.

It belongs to the semenogelin family. Interacts with SERPINA5.

Its subcellular location is the secreted. Functionally, participates in the formation of a gel matrix (sperm coagulum) entrapping the accessory gland secretions and ejaculated spermatozoa. This Hylobates klossii (Kloss's gibbon) protein is Semenogelin-2 (SEMG2).